The following is a 665-amino-acid chain: Cinnamate reductase (665 aa).

FMN is bound at residue Q109. Y182 acts as the Proton donor in catalysis. FMN contacts are provided by residues R230, R319, and 341-342; that span reads GR. [4Fe-4S] cluster-binding residues include C365, C368, C372, and C384. Positions 415, 434, 442, 452, and 479 each coordinate FAD.

It in the N-terminal section; belongs to the NADH:flavin oxidoreductase/NADH oxidase family. FMN serves as cofactor. FAD is required as a cofactor. It depends on [4Fe-4S] cluster as a cofactor.

It carries out the reaction 3-phenylpropanoate + NAD(+) = (E)-cinnamate + NADH + H(+). Its pathway is amino-acid degradation; L-phenylalanine degradation. Involved in the fermentation of L-phenylalanine via a Stickland reaction. Catalyzes the reduction of (E)-cinnamate to yield 3-phenylpropionate. The chain is Cinnamate reductase from Clostridium sporogenes (strain ATCC 7955 / DSM 767 / NBRC 16411 / NCIMB 8053 / NCTC 8594 / PA 3679).